Reading from the N-terminus, the 365-residue chain is Histidinol-phosphate aminotransferase (365 aa).

K223 carries the N6-(pyridoxal phosphate)lysine modification.

Belongs to the class-II pyridoxal-phosphate-dependent aminotransferase family. Histidinol-phosphate aminotransferase subfamily. Homodimer. Pyridoxal 5'-phosphate is required as a cofactor.

It carries out the reaction L-histidinol phosphate + 2-oxoglutarate = 3-(imidazol-4-yl)-2-oxopropyl phosphate + L-glutamate. It participates in amino-acid biosynthesis; L-histidine biosynthesis; L-histidine from 5-phospho-alpha-D-ribose 1-diphosphate: step 7/9. This is Histidinol-phosphate aminotransferase from Brucella melitensis biotype 1 (strain ATCC 23456 / CCUG 17765 / NCTC 10094 / 16M).